The sequence spans 265 residues: Hydroxyethylthiazole kinase (265 aa).

Met-55 serves as a coordination point for substrate. ATP-binding residues include Arg-130 and Ser-176. Gly-203 contributes to the substrate binding site.

This sequence belongs to the Thz kinase family. The cofactor is Mg(2+).

It catalyses the reaction 5-(2-hydroxyethyl)-4-methylthiazole + ATP = 4-methyl-5-(2-phosphooxyethyl)-thiazole + ADP + H(+). It functions in the pathway cofactor biosynthesis; thiamine diphosphate biosynthesis; 4-methyl-5-(2-phosphoethyl)-thiazole from 5-(2-hydroxyethyl)-4-methylthiazole: step 1/1. Catalyzes the phosphorylation of the hydroxyl group of 4-methyl-5-beta-hydroxyethylthiazole (THZ). The chain is Hydroxyethylthiazole kinase from Leptospira interrogans serogroup Icterohaemorrhagiae serovar copenhageni (strain Fiocruz L1-130).